Reading from the N-terminus, the 98-residue chain is Small ribosomal subunit protein bS6 (98 aa).

It belongs to the bacterial ribosomal protein bS6 family.

Binds together with bS18 to 16S ribosomal RNA. This Staphylococcus aureus (strain NCTC 8325 / PS 47) protein is Small ribosomal subunit protein bS6.